The chain runs to 412 residues: Divalent metal cation transporter MntH (412 aa).

The Cytoplasmic portion of the chain corresponds to 1–19; sequence MTNYRVESSSGRAARKMRL. A helical transmembrane segment spans residues 20–39; it reads ALMGPAFIAAIGYIDPGNFA. Residues 40 to 51 are Periplasmic-facing; that stretch reads TNIQAGASFGYQ. Residues 52–71 form a helical membrane-spanning segment; the sequence is LLWVVVWANLMAMLIQILSA. The Cytoplasmic portion of the chain corresponds to 72–95; the sequence is KLGIATGKNLAEQIRDHYPRPFVW. A helical membrane pass occupies residues 96-118; that stretch reads FYWVQAEIIAMATDLAEFIGAAI. Over 119–125 the chain is Periplasmic; it reads GFKLILG. The helical transmembrane segment at 126–145 threads the bilayer; the sequence is VSLLQGAVLTGIATFLILML. Residues 146-155 are Cytoplasmic-facing; it reads QRRGQKPLEK. Residues 156-175 form a helical membrane-spanning segment; it reads VIGGLLLFVAAAYIVELIFS. The Periplasmic segment spans residues 176–196; that stretch reads QPNLAQLGKGMVIPSLPTSEA. A helical transmembrane segment spans residues 197 to 220; the sequence is VFLAAGVLGATIMPHVIYLHSSLT. Over 221 to 238 the chain is Cytoplasmic; the sequence is QHLHGGSRQQRYSATKWD. A helical transmembrane segment spans residues 239–258; the sequence is VAIAMTIAGFVNLAMMATAA. At 259–276 the chain is on the periplasmic side; it reads AAFHFSGHTGVADLDEAY. A helical membrane pass occupies residues 277–297; the sequence is LTLQPLLSHAAATVFGLSLVA. Residues 298 to 327 are Cytoplasmic-facing; the sequence is AGLSSTVVGTLAGQVVMQGFIRFHIPLWVR. The helical transmembrane segment at 328–344 threads the bilayer; that stretch reads RTVTMLPSFIVILMGLD. At 345-350 the chain is on the periplasmic side; the sequence is PTRILV. A helical transmembrane segment spans residues 351–370; that stretch reads MSQVLLSFGIALALVPLLIF. Residues 371 to 387 are Cytoplasmic-facing; sequence TSDSKLMGDLVNSKRVK. A helical transmembrane segment spans residues 388-406; it reads QTGWVIVVLVVALNIWLLV. Residues 407–412 are Periplasmic-facing; it reads GTALGL.

It belongs to the NRAMP family.

The protein resides in the cell inner membrane. Its function is as follows. H(+)-stimulated, divalent metal cation uptake system. The polypeptide is Divalent metal cation transporter MntH (Escherichia coli O127:H6 (strain E2348/69 / EPEC)).